A 240-amino-acid polypeptide reads, in one-letter code: tRNA1(Val) (adenine(37)-N6)-methyltransferase (240 aa).

The protein belongs to the methyltransferase superfamily. tRNA (adenine-N(6)-)-methyltransferase family.

It localises to the cytoplasm. The enzyme catalyses adenosine(37) in tRNA1(Val) + S-adenosyl-L-methionine = N(6)-methyladenosine(37) in tRNA1(Val) + S-adenosyl-L-homocysteine + H(+). Its function is as follows. Specifically methylates the adenine in position 37 of tRNA(1)(Val) (anticodon cmo5UAC). This chain is tRNA1(Val) (adenine(37)-N6)-methyltransferase, found in Vibrio cholerae serotype O1 (strain ATCC 39315 / El Tor Inaba N16961).